The primary structure comprises 145 residues: Bacilliredoxin Acid345_1880 (145 aa).

It belongs to the bacilliredoxin family.

The chain is Bacilliredoxin Acid345_1880 from Koribacter versatilis (strain Ellin345).